The chain runs to 409 residues: Beta-glucanase (409 aa).

Positions 1–31 (MRKNRGFSFSSKAVMMCCLAFLLIPASFAFA) are cleaved as a signal peptide. Residue Glu95 is the Proton donor of the active site. Asp156 serves as the catalytic Nucleophile.

Belongs to the glycosyl hydrolase 8 (cellulase D) family.

The enzyme catalyses Hydrolysis of (1-&gt;4)-beta-D-glucosidic linkages in beta-D-glucans containing (1-&gt;3)- and (1-&gt;4)-bonds.. The polypeptide is Beta-glucanase (bgc) (Niallia circulans (Bacillus circulans)).